A 444-amino-acid chain; its full sequence is Histidinol dehydrogenase (444 aa).

Positions 135, 199, and 227 each coordinate NAD(+). Residues Thr250, Gln272, and His275 each contribute to the substrate site. Gln272 and His275 together coordinate Zn(2+). Catalysis depends on proton acceptor residues Glu341 and His342. Substrate contacts are provided by His342, Asp375, Glu429, and His434. Asp375 is a binding site for Zn(2+). His434 contacts Zn(2+).

It belongs to the histidinol dehydrogenase family. Zn(2+) serves as cofactor.

The enzyme catalyses L-histidinol + 2 NAD(+) + H2O = L-histidine + 2 NADH + 3 H(+). It participates in amino-acid biosynthesis; L-histidine biosynthesis; L-histidine from 5-phospho-alpha-D-ribose 1-diphosphate: step 9/9. Catalyzes the sequential NAD-dependent oxidations of L-histidinol to L-histidinaldehyde and then to L-histidine. This chain is Histidinol dehydrogenase (hisD), found in Mycobacterium bovis (strain ATCC BAA-935 / AF2122/97).